We begin with the raw amino-acid sequence, 193 residues long: Potassium-transporting ATPase KdpC subunit (193 aa).

Residues 7 to 27 (PALVLFAALTLLTGVAYPLAV) traverse the membrane as a helical segment.

This sequence belongs to the KdpC family. In terms of assembly, the system is composed of three essential subunits: KdpA, KdpB and KdpC.

It is found in the cell inner membrane. Part of the high-affinity ATP-driven potassium transport (or Kdp) system, which catalyzes the hydrolysis of ATP coupled with the electrogenic transport of potassium into the cytoplasm. This subunit acts as a catalytic chaperone that increases the ATP-binding affinity of the ATP-hydrolyzing subunit KdpB by the formation of a transient KdpB/KdpC/ATP ternary complex. This is Potassium-transporting ATPase KdpC subunit from Rhodospirillum rubrum (strain ATCC 11170 / ATH 1.1.1 / DSM 467 / LMG 4362 / NCIMB 8255 / S1).